The chain runs to 38 residues: HADGIYTSDVASLTDYLKSKRFVESLSNYNKRQNDRRM.

This sequence belongs to the glucagon family.

It is found in the secreted. The chain is Glucagon-like peptide from Hydrolagus colliei (Spotted ratfish).